The following is a 333-amino-acid chain: Arginase (333 aa).

The residue at position 1 (Met-1) is an N-acetylmethionine. Position 16 is a phosphoserine (Ser-16). Thr-77 bears the Phosphothreonine mark. Mn(2+) is bound by residues His-123, Asp-146, His-148, and Asp-150. Substrate-binding positions include 148–152, 159–161, and Asp-205; these read HADIN and SGN. Residues Asp-256 and Asp-258 each coordinate Mn(2+). The residue at position 270 (Thr-270) is a Phosphothreonine. 2 residues coordinate substrate: Thr-270 and Glu-301.

Belongs to the arginase family. In terms of assembly, homotrimer. Mn(2+) is required as a cofactor.

The enzyme catalyses L-arginine + H2O = urea + L-ornithine. Its pathway is nitrogen metabolism; urea cycle; L-ornithine and urea from L-arginine: step 1/1. The sequence is that of Arginase (CAR1) from Saccharomyces cerevisiae (strain ATCC 204508 / S288c) (Baker's yeast).